The primary structure comprises 334 residues: S-adenosylmethionine decarboxylase proenzyme (334 aa).

F7 serves as a coordination point for substrate. Active-site residues include E8 and E11. Residue E67 participates in substrate binding. Residue S68 is the Schiff-base intermediate with substrate; via pyruvic acid of the active site. At S68 the chain carries Pyruvic acid (Ser); by autocatalysis. The active-site Proton donor; for catalytic activity is C82. F223 provides a ligand contact to substrate. Active-site proton acceptor; for processing activity residues include S229 and H243. E247 lines the substrate pocket. S298 carries the phosphoserine modification.

Belongs to the eukaryotic AdoMetDC family. Heterotetramer of two alpha and two beta chains. It depends on pyruvate as a cofactor. Is synthesized initially as an inactive proenzyme. Formation of the active enzyme involves a self-maturation process in which the active site pyruvoyl group is generated from an internal serine residue via an autocatalytic post-translational modification. Two non-identical subunits are generated from the proenzyme in this reaction, and the pyruvate is formed at the N-terminus of the alpha chain, which is derived from the carboxyl end of the proenzyme. The post-translation cleavage follows an unusual pathway, termed non-hydrolytic serinolysis, in which the side chain hydroxyl group of the serine supplies its oxygen atom to form the C-terminus of the beta chain, while the remainder of the serine residue undergoes an oxidative deamination to produce ammonia and the pyruvoyl group blocking the N-terminus of the alpha chain.

It catalyses the reaction S-adenosyl-L-methionine + H(+) = S-adenosyl 3-(methylsulfanyl)propylamine + CO2. The protein operates within amine and polyamine biosynthesis; S-adenosylmethioninamine biosynthesis; S-adenosylmethioninamine from S-adenosyl-L-methionine: step 1/1. In terms of biological role, essential for biosynthesis of the polyamines spermidine and spermine. Promotes maintenance and self-renewal of embryonic stem cells, by maintaining spermine levels. This is S-adenosylmethionine decarboxylase proenzyme (AMD1) from Mesocricetus auratus (Golden hamster).